We begin with the raw amino-acid sequence, 89 residues long: Small ribosomal subunit protein uS15 (89 aa).

It belongs to the universal ribosomal protein uS15 family. As to quaternary structure, part of the 30S ribosomal subunit. Forms a bridge to the 50S subunit in the 70S ribosome, contacting the 23S rRNA.

One of the primary rRNA binding proteins, it binds directly to 16S rRNA where it helps nucleate assembly of the platform of the 30S subunit by binding and bridging several RNA helices of the 16S rRNA. Its function is as follows. Forms an intersubunit bridge (bridge B4) with the 23S rRNA of the 50S subunit in the ribosome. This Desulfotalea psychrophila (strain LSv54 / DSM 12343) protein is Small ribosomal subunit protein uS15.